Here is a 349-residue protein sequence, read N- to C-terminus: Transcription factor HBP-1a (349 aa).

The segment covering 1–11 (MGSNDPSTPSK) has biased composition (polar residues). 4 disordered regions span residues 1 to 39 (MGSNDPSTPSKASKPPEQEQPPATTSGTTAPVYPEWPGF), 101 to 196 (FHYP…NKPM), 224 to 277 (GATG…QAEC), and 312 to 349 (NTSLKAKLGESGGGGGSDAVPDMNERGDTNGGSHQKEP). The span at 113–124 (PAGAQGAAPGAA) shows a compositional bias: low complexity. Over residues 174 to 191 (NENGSAQNGVSHSSSHGT) the composition is skewed to polar residues. The 64-residue stretch at 252–315 (ELKKQKRKLS…EELLSKNTSL (64 aa)) folds into the bZIP domain. The basic motif stretch occupies residues 254-273 (KKQKRKLSNRESARRSRLRK). Residues 261 to 277 (SNRESARRSRLRKQAEC) are compositionally biased toward basic and acidic residues. The tract at residues 280–315 (LGQRAEALKSENSSLRIELDRIKKEYEELLSKNTSL) is leucine-zipper. Over residues 334 to 349 (MNERGDTNGGSHQKEP) the composition is skewed to basic and acidic residues.

The protein belongs to the bZIP family. Binds DNA as a dimer.

The protein resides in the nucleus. Binds to the hexamer motif 5'-ACGTCA-3' of histone gene promoters. This chain is Transcription factor HBP-1a, found in Triticum aestivum (Wheat).